Here is a 292-residue protein sequence, read N- to C-terminus: Transcription antiterminator LacT (292 aa).

PRD domains lie at 66 to 170 and 172 to 284; these read NIPI…DDGE and VFGK…APAQ.

Belongs to the transcriptional antiterminator BglG family.

Functionally, mediates positive regulation of the lac operon by functioning as an antiterminator factor of transcription. The polypeptide is Transcription antiterminator LacT (lacT) (Lacticaseibacillus casei (Lactobacillus casei)).